A 298-amino-acid polypeptide reads, in one-letter code: Estradiol 17-beta-dehydrogenase 11 (298 aa).

The signal sequence occupies residues 1 to 21 (MKYLLDLILLLPLLIVFSIES). 40–64 (LITGAGHGIGRLTAYEFAKLNTKLV) is a binding site for NADP(+). Residue Ser172 participates in substrate binding. Tyr185 functions as the Proton acceptor in the catalytic mechanism.

Belongs to the short-chain dehydrogenases/reductases (SDR) family. 17-beta-HSD 3 subfamily. As to expression, expressed in the liver (at protein level). Also expressed in the intestine and, at much lower levels, in the kidney.

Its subcellular location is the endoplasmic reticulum. The protein resides in the lipid droplet. It carries out the reaction 17beta-estradiol + NAD(+) = estrone + NADH + H(+). The enzyme catalyses 17beta-estradiol + NADP(+) = estrone + NADPH + H(+). Functionally, can convert androstan-3-alpha,17-beta-diol (3-alpha-diol) to androsterone in vitro, suggesting that it may participate in androgen metabolism during steroidogenesis. May act by metabolizing compounds that stimulate steroid synthesis and/or by generating metabolites that inhibit it. Has no activity toward DHEA (dehydroepiandrosterone), or A-dione (4-androste-3,17-dione), and only a slight activity toward testosterone to A-dione. This chain is Estradiol 17-beta-dehydrogenase 11 (Hsd17b11), found in Mus musculus (Mouse).